Reading from the N-terminus, the 251-residue chain is Ribosomal RNA small subunit methyltransferase J (251 aa).

Residues 100–101 (RD), 116–117 (ER), and Asp-170 contribute to the S-adenosyl-L-methionine site.

The protein belongs to the methyltransferase superfamily. RsmJ family.

Its subcellular location is the cytoplasm. The catalysed reaction is guanosine(1516) in 16S rRNA + S-adenosyl-L-methionine = N(2)-methylguanosine(1516) in 16S rRNA + S-adenosyl-L-homocysteine + H(+). Specifically methylates the guanosine in position 1516 of 16S rRNA. The protein is Ribosomal RNA small subunit methyltransferase J of Actinobacillus pleuropneumoniae serotype 3 (strain JL03).